The sequence spans 241 residues: Uridylate kinase (241 aa).

Residue 12–15 coordinates ATP; it reads KLSG. Residues 20-25 are involved in allosteric activation by GTP; the sequence is GDKGVG. Gly54 lines the UMP pocket. ATP is bound by residues Gly55 and Arg59. Residues Asp74 and 135 to 142 contribute to the UMP site; that span reads IGSPYFST. 3 residues coordinate ATP: Asn163, Tyr169, and Asp172.

Belongs to the UMP kinase family. In terms of assembly, homohexamer.

Its subcellular location is the cytoplasm. It carries out the reaction UMP + ATP = UDP + ADP. It participates in pyrimidine metabolism; CTP biosynthesis via de novo pathway; UDP from UMP (UMPK route): step 1/1. Its activity is regulated as follows. Allosterically activated by GTP. Inhibited by UTP. Functionally, catalyzes the reversible phosphorylation of UMP to UDP. This chain is Uridylate kinase, found in Streptococcus gordonii (strain Challis / ATCC 35105 / BCRC 15272 / CH1 / DL1 / V288).